The following is a 643-amino-acid chain: Nicastrin (643 aa).

Positions 1–20 (MRFKNVLVLLLLLVFSVINS) are cleaved as a signal peptide. The Extracellular portion of the chain corresponds to 21 to 611 (EPSAPATISD…VFKIGNSTTE (591 aa)). Cysteines 42 and 54 form a disulfide. Residues Asn96 and Asn166 are each glycosylated (N-linked (GlcNAc...) asparagine). 2 disulfides stabilise this stretch: Cys204–Cys210 and Cys308–Cys318. Asn333 and Asn385 each carry an N-linked (GlcNAc...) asparagine glycan. 3 disulfide bridges follow: Cys479–Cys486, Cys540–Cys551, and Cys546–Cys556. An N-linked (GlcNAc...) asparagine glycan is attached at Asn584. The chain crosses the membrane as a helical span at residues 612–632 (IWFLVSGLIELLVSIGLILYV). At 633–643 (KKFLSNRYKLL) the chain is on the cytoplasmic side.

It belongs to the nicastrin family. In terms of assembly, component of the gamma-secretase complex, a complex composed of a presenilin homodimer, nicastrin, aph1 and pen2.

The protein resides in the membrane. Functionally, essential subunit of the gamma-secretase complex, an endoprotease complex that catalyzes the intramembrane cleavage of integral membrane proteins such as Notch receptors and APP (amyloid-beta precursor protein). This is Nicastrin from Dictyostelium purpureum (Slime mold).